Here is a 64-residue protein sequence, read N- to C-terminus: Small ribosomal subunit protein bS21 (64 aa).

The disordered stretch occupies residues 42-64; it reads KKEKEKAAAKKRNKYNKRRSFYY. Residues 50-64 show a composition bias toward basic residues; that stretch reads AKKRNKYNKRRSFYY.

It belongs to the bacterial ribosomal protein bS21 family.

This is Small ribosomal subunit protein bS21 from Malacoplasma penetrans (strain HF-2) (Mycoplasma penetrans).